We begin with the raw amino-acid sequence, 690 residues long: Eukaryotic translation initiation factor 3 subunit B (690 aa).

The tract at residues 1 to 37 (MAKKKSEEQSSADANDSDYQEEPNFEDPPGFVDNISD) is disordered. Residues 15–25 (NDSDYQEEPNF) show a composition bias toward acidic residues. One can recognise an RRM domain in the interval 57 to 141 (SVVVVDNIPK…HTFAVNLFTD (85 aa)). WD repeat units follow at residues 207 to 246 (TRERFTDTFVKWSPLGTYVVTFHKPGVAIWGGSSFQKIQK), 293 to 331 (DGMSVLSMFRWSHDDKFVARMGENSIHIYETPSFYLLDL), 334 to 369 (IKIPGIRGFSWSPTDNVIAYWVEEQNQIPARVTLME), 442 to 484 (EIRE…KPSL), and 530 to 575 (PDHF…IKRT). The stretch at 595–645 (EEKQKEIKKNLKKYYAAFEQKDRLRLTRASKELLEKRSQLRETFMEYRNKR) forms a coiled coil.

This sequence belongs to the eIF-3 subunit B family. Component of the eukaryotic translation initiation factor 3 (eIF-3) complex. The eIF-3 complex interacts with pix. Interacts with mxt.

The protein resides in the cytoplasm. Functionally, RNA-binding component of the eukaryotic translation initiation factor 3 (eIF-3) complex, which is involved in protein synthesis of a specialized repertoire of mRNAs and, together with other initiation factors, stimulates binding of mRNA and methionyl-tRNAi to the 40S ribosome. The eIF-3 complex specifically targets and initiates translation of a subset of mRNAs involved in cell proliferation. In Drosophila sechellia (Fruit fly), this protein is Eukaryotic translation initiation factor 3 subunit B.